Here is a 60-residue protein sequence, read N- to C-terminus: UPF0291 protein Nther_1806 (60 aa).

It belongs to the UPF0291 family.

It localises to the cytoplasm. This is UPF0291 protein Nther_1806 from Natranaerobius thermophilus (strain ATCC BAA-1301 / DSM 18059 / JW/NM-WN-LF).